The chain runs to 61 residues: Metallothionein-2E (61 aa).

The residue at position 1 (M1) is an N-acetylmethionine. The interval 1–29 (MDPNCSCATRDSCACASSCKCKECKCTSC) is beta. A divalent metal cation is bound by residues C5, C7, C13, C15, C19, C21, C24, C26, C29, C33, C34, C36, C37, C41, C44, C48, C50, C57, C59, and C60. Residues 30–61 (KKSCCSCCPAGCTKCAQGCICKGALDKCSCCA) are alpha.

It belongs to the metallothionein superfamily. Type 1 family. In terms of assembly, monomer.

Its function is as follows. Metallothioneins have a high content of cysteine residues that bind various heavy metals; these proteins are transcriptionally regulated by both heavy metals and glucocorticoids. This chain is Metallothionein-2E, found in Oryctolagus cuniculus (Rabbit).